A 230-amino-acid chain; its full sequence is Large ribosomal subunit protein uL1 (230 aa).

The protein belongs to the universal ribosomal protein uL1 family. As to quaternary structure, part of the 50S ribosomal subunit.

Functionally, binds directly to 23S rRNA. The L1 stalk is quite mobile in the ribosome, and is involved in E site tRNA release. Protein L1 is also a translational repressor protein, it controls the translation of the L11 operon by binding to its mRNA. In Oenococcus oeni (strain ATCC BAA-331 / PSU-1), this protein is Large ribosomal subunit protein uL1.